We begin with the raw amino-acid sequence, 121 residues long: Large ribosomal subunit protein uL22 (121 aa).

Belongs to the universal ribosomal protein uL22 family. In terms of assembly, part of the 50S ribosomal subunit.

In terms of biological role, this protein binds specifically to 23S rRNA; its binding is stimulated by other ribosomal proteins, e.g. L4, L17, and L20. It is important during the early stages of 50S assembly. It makes multiple contacts with different domains of the 23S rRNA in the assembled 50S subunit and ribosome. Its function is as follows. The globular domain of the protein is located near the polypeptide exit tunnel on the outside of the subunit, while an extended beta-hairpin is found that lines the wall of the exit tunnel in the center of the 70S ribosome. This chain is Large ribosomal subunit protein uL22, found in Micrococcus luteus (strain ATCC 4698 / DSM 20030 / JCM 1464 / CCM 169 / CCUG 5858 / IAM 1056 / NBRC 3333 / NCIMB 9278 / NCTC 2665 / VKM Ac-2230) (Micrococcus lysodeikticus).